The sequence spans 204 residues: Large ribosomal subunit protein uL4 (204 aa).

The segment at 49–75 is disordered; it reads TKGRSDVSGGGKKPWRQKGRGGARAGS.

This sequence belongs to the universal ribosomal protein uL4 family. As to quaternary structure, part of the 50S ribosomal subunit.

One of the primary rRNA binding proteins, this protein initially binds near the 5'-end of the 23S rRNA. It is important during the early stages of 50S assembly. It makes multiple contacts with different domains of the 23S rRNA in the assembled 50S subunit and ribosome. In terms of biological role, forms part of the polypeptide exit tunnel. The chain is Large ribosomal subunit protein uL4 from Campylobacter jejuni subsp. jejuni serotype O:23/36 (strain 81-176).